We begin with the raw amino-acid sequence, 93 residues long: UPF0337 protein Bd3330 (93 aa).

It belongs to the UPF0337 (CsbD) family.

This is UPF0337 protein Bd3330 from Bdellovibrio bacteriovorus (strain ATCC 15356 / DSM 50701 / NCIMB 9529 / HD100).